Reading from the N-terminus, the 123-residue chain is Small ribosomal subunit protein uS12 (123 aa).

Residue aspartate 90 is modified to 3-methylthioaspartic acid.

This sequence belongs to the universal ribosomal protein uS12 family. In terms of assembly, part of the 30S ribosomal subunit. Contacts proteins S8 and S17. May interact with IF1 in the 30S initiation complex.

Its function is as follows. With S4 and S5 plays an important role in translational accuracy. In terms of biological role, interacts with and stabilizes bases of the 16S rRNA that are involved in tRNA selection in the A site and with the mRNA backbone. Located at the interface of the 30S and 50S subunits, it traverses the body of the 30S subunit contacting proteins on the other side and probably holding the rRNA structure together. The combined cluster of proteins S8, S12 and S17 appears to hold together the shoulder and platform of the 30S subunit. The chain is Small ribosomal subunit protein uS12 from Ehrlichia ruminantium (strain Gardel).